The chain runs to 294 residues: Probable 3-hydroxyisobutyrate dehydrogenase (294 aa).

NAD(+)-binding positions include 3-31 (TIAF…RGFD) and T93. K168 is a catalytic residue. Residue K243 participates in NAD(+) binding.

It belongs to the HIBADH-related family.

It carries out the reaction 3-hydroxy-2-methylpropanoate + NAD(+) = 2-methyl-3-oxopropanoate + NADH + H(+). The protein operates within amino-acid degradation; L-valine degradation. The chain is Probable 3-hydroxyisobutyrate dehydrogenase (mmsB) from Mycobacterium bovis (strain ATCC BAA-935 / AF2122/97).